A 330-amino-acid polypeptide reads, in one-letter code: Tryptophan--tRNA ligase (330 aa).

Residues 10–12 (QTT) and 18–19 (GN) each bind ATP. A 'HIGH' region motif is present at residues 11–19 (TTGALHLGN). D134 is an L-tryptophan binding site. ATP is bound by residues 146 to 148 (GED), I186, and 195 to 199 (KMSKS). Residues 195–199 (KMSKS) carry the 'KMSKS' region motif.

This sequence belongs to the class-I aminoacyl-tRNA synthetase family. In terms of assembly, homodimer.

Its subcellular location is the cytoplasm. The enzyme catalyses tRNA(Trp) + L-tryptophan + ATP = L-tryptophyl-tRNA(Trp) + AMP + diphosphate + H(+). Functionally, catalyzes the attachment of tryptophan to tRNA(Trp). This is Tryptophan--tRNA ligase from Rickettsia typhi (strain ATCC VR-144 / Wilmington).